We begin with the raw amino-acid sequence, 588 residues long: Transport ATP-binding protein AarD (588 aa).

Residues 24-316 form the ABC transmembrane type-1 domain; it reads LRISMLLGVV…LGTYYHAKAQ (293 aa). Helical transmembrane passes span 29-49, 62-82, 149-169, 170-190, 250-270, and 276-296; these read LLGV…AVIL, LLTP…LTVI, IIPI…ALIL, FATA…AADA, SGVL…YFGF, and LNFG…ALIL. The ABC transporter domain maps to 350 to 583; the sequence is IEANKLEIYS…EGPFARLLAH (234 aa). 383–390 contributes to the ATP binding site; it reads GQSGAGKS.

Belongs to the ABC transporter superfamily.

It localises to the cell inner membrane. In terms of biological role, somehow involved in the cytochrome D branch of aerobic respiration. Seems to be a component of a transport system. The protein is Transport ATP-binding protein AarD (aarD) of Providencia stuartii.